The sequence spans 401 residues: Ornithine aminotransferase (401 aa).

Residue K258 is modified to N6-(pyridoxal phosphate)lysine.

It belongs to the class-III pyridoxal-phosphate-dependent aminotransferase family. OAT subfamily. It depends on pyridoxal 5'-phosphate as a cofactor.

The protein resides in the cytoplasm. The catalysed reaction is a 2-oxocarboxylate + L-ornithine = L-glutamate 5-semialdehyde + an L-alpha-amino acid. Its pathway is amino-acid biosynthesis; L-proline biosynthesis; L-glutamate 5-semialdehyde from L-ornithine: step 1/1. Functionally, catalyzes the interconversion of ornithine to glutamate semialdehyde. The polypeptide is Ornithine aminotransferase (Bacillus subtilis (strain 168)).